The following is a 152-amino-acid chain: Protein SprT-like (152 aa).

Residues 7–148 (QRLVEEVSLQ…GKCKGKLNLI (142 aa)) enclose the SprT-like domain. H67 serves as a coordination point for Zn(2+). E68 is a catalytic residue. H71 provides a ligand contact to Zn(2+).

Belongs to the SprT family. The cofactor is Zn(2+).

The protein localises to the cytoplasm. The polypeptide is Protein SprT-like (Bacillus cereus (strain 03BB102)).